The following is a 329-amino-acid chain: ATP phosphoribosyltransferase regulatory subunit (329 aa).

Belongs to the class-II aminoacyl-tRNA synthetase family. HisZ subfamily. Heteromultimer composed of HisG and HisZ subunits.

It is found in the cytoplasm. It participates in amino-acid biosynthesis; L-histidine biosynthesis; L-histidine from 5-phospho-alpha-D-ribose 1-diphosphate: step 1/9. Required for the first step of histidine biosynthesis. May allow the feedback regulation of ATP phosphoribosyltransferase activity by histidine. This chain is ATP phosphoribosyltransferase regulatory subunit, found in Streptococcus gordonii (strain Challis / ATCC 35105 / BCRC 15272 / CH1 / DL1 / V288).